The primary structure comprises 222 residues: GTP cyclohydrolase 1 (222 aa).

Cys-111, His-114, and Cys-182 together coordinate Zn(2+).

The protein belongs to the GTP cyclohydrolase I family. As to quaternary structure, toroid-shaped homodecamer, composed of two pentamers of five dimers.

The catalysed reaction is GTP + H2O = 7,8-dihydroneopterin 3'-triphosphate + formate + H(+). Its pathway is cofactor biosynthesis; 7,8-dihydroneopterin triphosphate biosynthesis; 7,8-dihydroneopterin triphosphate from GTP: step 1/1. This is GTP cyclohydrolase 1 from Enterobacter sp. (strain 638).